A 637-amino-acid polypeptide reads, in one-letter code: Sphingomyelin phosphodiesterase B (637 aa).

The first 20 residues, 1-20, serve as a signal peptide directing secretion; sequence MKVKAPILLLFVFLINFCFS. An N-linked (GlcNAc...) asparagine glycan is attached at Asn73. The region spanning 73 to 155 is the Saposin B-type domain; it reads NGTKCDICKF…GFVGFCPYVP (83 aa). Disulfide bonds link Cys77/Cys151, Cys80/Cys145, and Cys108/Cys119. 2 N-linked (GlcNAc...) asparagine glycosylation sites follow: Asn128 and Asn157. 2 residues coordinate Zn(2+): Asp191 and His193. Cys212 and Cys233 are disulfide-bonded. Asp263 serves as a coordination point for Zn(2+). N-linked (GlcNAc...) asparagine glycosylation is present at Asn279. Residue Asn304 coordinates Zn(2+). An N-linked (GlcNAc...) asparagine glycan is attached at Asn377. Positions 407, 441, and 443 each coordinate Zn(2+). Asn523 and Asn546 each carry an N-linked (GlcNAc...) asparagine glycan. Cys582 and Cys595 are disulfide-bonded. Residue Asn606 is glycosylated (N-linked (GlcNAc...) asparagine).

Belongs to the acid sphingomyelinase family. Zn(2+) serves as cofactor.

It is found in the secreted. In terms of biological role, converts sphingomyelin to ceramide. The protein is Sphingomyelin phosphodiesterase B (sgmB) of Dictyostelium discoideum (Social amoeba).